The primary structure comprises 216 residues: UPF0502 protein VCM66_A0698 (216 aa).

Belongs to the UPF0502 family.

This chain is UPF0502 protein VCM66_A0698, found in Vibrio cholerae serotype O1 (strain M66-2).